Reading from the N-terminus, the 389-residue chain is Mannitol-1-phosphate 5-dehydrogenase (389 aa).

Alanine 5–glycine 16 is a binding site for NAD(+). Residue lysine 215 is part of the active site.

It belongs to the mannitol dehydrogenase family. Monomer.

It catalyses the reaction D-mannitol 1-phosphate + NAD(+) = beta-D-fructose 6-phosphate + NADH + H(+). Catalyzes the NAD(H)-dependent interconversion of D-fructose 6-phosphate and D-mannitol 1-phosphate in the mannitol metabolic pathway. The polypeptide is Mannitol-1-phosphate 5-dehydrogenase (Sclerotinia sclerotiorum (strain ATCC 18683 / 1980 / Ss-1) (White mold)).